The chain runs to 510 residues: Probable cytosol aminopeptidase (510 aa).

Mn(2+)-binding residues include K254 and D259. The active site involves K266. Mn(2+) is bound by residues D277, D336, and E338. Residue R340 is part of the active site. A disordered region spans residues 487–510 (AQPVKASPKTRPARKSTPAAKTRA).

The protein belongs to the peptidase M17 family. Mn(2+) is required as a cofactor.

Its subcellular location is the cytoplasm. The enzyme catalyses Release of an N-terminal amino acid, Xaa-|-Yaa-, in which Xaa is preferably Leu, but may be other amino acids including Pro although not Arg or Lys, and Yaa may be Pro. Amino acid amides and methyl esters are also readily hydrolyzed, but rates on arylamides are exceedingly low.. It carries out the reaction Release of an N-terminal amino acid, preferentially leucine, but not glutamic or aspartic acids.. Functionally, presumably involved in the processing and regular turnover of intracellular proteins. Catalyzes the removal of unsubstituted N-terminal amino acids from various peptides. The protein is Probable cytosol aminopeptidase of Polaromonas naphthalenivorans (strain CJ2).